The chain runs to 2925 residues: Otogelin (2925 aa).

The signal sequence occupies residues 1 to 25 (MGVLASALCWLLCVWLPWGEQAAES). A disordered region spans residues 39-69 (GRSGARGMRNVKGMRNGPAQTRVSSSSSHQE). Residues 56-69 (PAQTRVSSSSSHQE) are compositionally biased toward polar residues. The 38-residue stretch at 102–139 (HRAKCAPSYLFSCFNGGECVHPAFCDCRRFNATGPRCQ) folds into the EGF-like domain. Disulfide bonds link Cys-106–Cys-120, Cys-114–Cys-126, Cys-128–Cys-138, Cys-152–Cys-285, and Cys-199–Cys-206. Residues 150-322 (SICRAWGQHH…SWQEQAPNQP (173 aa)) form the VWFD 1 domain. The segment at 316-335 (EQAPNQPPGPTTSSLPRPPC) is disordered. Positions 326–335 (TTSSLPRPPC) are enriched in polar residues. The 177-residue stretch at 512 to 688 (AECSVTGDIH…NSWKTLSACS (177 aa)) folds into the VWFD 2 domain. 3 disulfide bridges follow: Cys-514/Cys-652, Cys-536/Cys-687, and Cys-558/Cys-566. A TIL domain is found at 780–844 (CEASKEYSPC…ADLCVPRNQC (65 aa)). Asn-914 carries an N-linked (GlcNAc...) asparagine glycan. Positions 984–1152 (STCTAYGDRH…SWAAVECPDT (169 aa)) constitute a VWFD 3 domain. Disulfide bonds link Cys-986-Cys-1115 and Cys-1030-Cys-1037. The disordered stretch occupies residues 1476 to 1540 (LGNETLPPSQ…PVVSPGPTQT (65 aa)). Asn-1478 carries N-linked (GlcNAc...) asparagine glycosylation. The span at 1502–1528 (PRTPTHRPALTPAAPLTTALNPPVTAT) shows a compositional bias: low complexity. N-linked (GlcNAc...) asparagine glycosylation is present at Asn-1612. 3 disordered regions span residues 1636–1679 (GHGS…HKAV), 1693–1715 (VPQPTQAQSASSPSTPLTVAGTA), and 1737–1788 (KGEA…ASLS). A compositionally biased stretch (polar residues) spans 1650–1659 (SLTASPSSRP). The span at 1694–1708 (PQPTQAQSASSPSTP) shows a compositional bias: low complexity. Positions 1751–1764 (SPQPHPLPSAPPRP) are enriched in pro residues. One can recognise a VWFD 4 domain in the interval 2110–2289 (CRCSIFPDLS…SWQVPSSLTS (180 aa)). 5 cysteine pairs are disulfide-bonded: Cys-2112/Cys-2249, Cys-2840/Cys-2889, Cys-2854/Cys-2903, Cys-2865/Cys-2920, and Cys-2869/Cys-2922. In terms of domain architecture, CTCK spans 2840-2925 (CKKVTIRMTI…EPTDCACQWS (86 aa)).

The protein belongs to the otogelin family. Post-translationally, N-glycosylated. Not O-glycosylated.

The protein localises to the apical cell membrane. It is found in the secreted. It localises to the extracellular space. Glycoprotein specific to acellular membranes of the inner ear. May be required for the anchoring of the otoconial membranes and cupulae to the underlying neuroepithelia in the vestibule. May be involved in the organization and/or stabilization of the fibrillar network that compose the tectorial membrane in the cochlea. May play a role in mechanotransduction processes. In Homo sapiens (Human), this protein is Otogelin (OTOG).